The following is a 235-amino-acid chain: NAD(P)H-hydrate epimerase (235 aa).

The region spanning 18-221 (AAQIDEQLFT…SLVDEHELLM (204 aa)) is the YjeF N-terminal domain. 65–69 (NNGGD) lines the (6S)-NADPHX pocket. K(+) is bound by residues asparagine 66 and aspartate 127. (6S)-NADPHX is bound by residues 131 to 137 (GFSFHPP) and aspartate 160. K(+) is bound at residue serine 163.

The protein belongs to the NnrE/AIBP family. K(+) is required as a cofactor.

It catalyses the reaction (6R)-NADHX = (6S)-NADHX. The catalysed reaction is (6R)-NADPHX = (6S)-NADPHX. Catalyzes the epimerization of the S- and R-forms of NAD(P)HX, a damaged form of NAD(P)H that is a result of enzymatic or heat-dependent hydration. This is a prerequisite for the S-specific NAD(P)H-hydrate dehydratase to allow the repair of both epimers of NAD(P)HX. The polypeptide is NAD(P)H-hydrate epimerase (Caenorhabditis elegans).